The sequence spans 249 residues: tRNA pseudouridine synthase A (249 aa).

Asp-52 (nucleophile) is an active-site residue. Position 111 (Tyr-111) interacts with substrate.

Belongs to the tRNA pseudouridine synthase TruA family. Homodimer.

It carries out the reaction uridine(38/39/40) in tRNA = pseudouridine(38/39/40) in tRNA. Functionally, formation of pseudouridine at positions 38, 39 and 40 in the anticodon stem and loop of transfer RNAs. This chain is tRNA pseudouridine synthase A, found in Caulobacter sp. (strain K31).